The chain runs to 201 residues: Small ribosomal subunit protein uS4 (201 aa).

The S4 RNA-binding domain maps to 103-167 (RRLQTIVTKK…SKIPQVLEKT (65 aa)). The interval 163 to 201 (VLEKTKSEAPAEETVEAPAEETVEAPAEEKKEESPSTES) is disordered. Acidic residues predominate over residues 172 to 185 (PAEETVEAPAEETV). Residues 189–201 (AEEKKEESPSTES) show a composition bias toward basic and acidic residues.

Belongs to the universal ribosomal protein uS4 family. In terms of assembly, part of the 30S ribosomal subunit. Contacts protein S5. The interaction surface between S4 and S5 is involved in control of translational fidelity.

In terms of biological role, one of the primary rRNA binding proteins, it binds directly to 16S rRNA where it nucleates assembly of the body of the 30S subunit. Its function is as follows. With S5 and S12 plays an important role in translational accuracy. In Nitrosopumilus maritimus (strain SCM1), this protein is Small ribosomal subunit protein uS4.